The following is a 71-amino-acid chain: Gas vesicle protein A (71 aa).

The interval Leu-12–Lys-22 is alpha helix 1. The beta-strand 1 stretch occupies residues Ile-26–Leu-34. The tract at residues Val-35–Ile-37 is beta turn. Positions Glu-38–Val-46 are beta-strand 2. Residues Val-51 to Ala-70 form an alpha helix 2 region.

This sequence belongs to the gas vesicle GvpA family. In terms of assembly, the gas vesicle shell is 2 nm thick and consists of a single layer of this protein. It forms helical ribs nearly perpendicular to the long axis of the vesicle.

The protein resides in the gas vesicle shell. Gas vesicles are hollow, gas filled proteinaceous nanostructures found in some microorganisms. During planktonic growth they allow positioning of the organism at a favorable depth for light or nutrient acquisition. GvpA forms the protein shell. This Microcystis sp. (strain BC 84/1) protein is Gas vesicle protein A.